Reading from the N-terminus, the 505-residue chain is ATP synthase subunit alpha (505 aa).

G170–T177 lines the ATP pocket.

Belongs to the ATPase alpha/beta chains family. In terms of assembly, F-type ATPases have 2 components, CF(1) - the catalytic core - and CF(0) - the membrane proton channel. CF(1) has five subunits: alpha(3), beta(3), gamma(1), delta(1), epsilon(1). CF(0) has four main subunits: a(1), b(1), b'(1) and c(9-12).

Its subcellular location is the cellular thylakoid membrane. It carries out the reaction ATP + H2O + 4 H(+)(in) = ADP + phosphate + 5 H(+)(out). Produces ATP from ADP in the presence of a proton gradient across the membrane. The alpha chain is a regulatory subunit. This is ATP synthase subunit alpha from Prochlorococcus marinus (strain MIT 9303).